Here is a 166-residue protein sequence, read N- to C-terminus: Small ribosomal subunit protein uS5 (166 aa).

The 64-residue stretch at 11-74 (LQEKLIAVNR…EKARRNMINV (64 aa)) folds into the S5 DRBM domain.

It belongs to the universal ribosomal protein uS5 family. Part of the 30S ribosomal subunit. Contacts proteins S4 and S8.

With S4 and S12 plays an important role in translational accuracy. Its function is as follows. Located at the back of the 30S subunit body where it stabilizes the conformation of the head with respect to the body. This Haemophilus ducreyi (strain 35000HP / ATCC 700724) protein is Small ribosomal subunit protein uS5.